A 432-amino-acid polypeptide reads, in one-letter code: Glutamyl-tRNA reductase (432 aa).

Substrate-binding positions include 55-58 (TCNR), Ser-114, 119-121 (ETQ), and Gln-125. Residue Cys-56 is the Nucleophile of the active site. 194-199 (GAGEMI) provides a ligand contact to NADP(+).

It belongs to the glutamyl-tRNA reductase family. In terms of assembly, homodimer.

The catalysed reaction is (S)-4-amino-5-oxopentanoate + tRNA(Glu) + NADP(+) = L-glutamyl-tRNA(Glu) + NADPH + H(+). Its pathway is porphyrin-containing compound metabolism; protoporphyrin-IX biosynthesis; 5-aminolevulinate from L-glutamyl-tRNA(Glu): step 1/2. Catalyzes the NADPH-dependent reduction of glutamyl-tRNA(Glu) to glutamate 1-semialdehyde (GSA). The protein is Glutamyl-tRNA reductase of Burkholderia multivorans (strain ATCC 17616 / 249).